The following is a 412-amino-acid chain: MNAEIIAVGTELLLGQIANTNAQFLSEKLASIGINVYYHTVVGDNNKRLQQAIEVAEERADMLIFTGGLGPTKDDLTKETIASSLAEELVYDEKALASISDYFKRTGREFTENNKKQALVLDGATVFANDHGMAPGMGLNKNGKVYILLPGPPKEMKPMYVSYVEPFLRNFTTGENIYSRVLRFFGIGESQLEVKVQDLIDGQTNPTIAPLANDGEVTLRLTAKHQNVDEAEKLIQHVEDLILERVGGFFYGYDQEFLHDKAIVLLKKKGLTLACAESLTGGLFGNQVTESAGVSSVFKGGVICYHNDVKQHVLHVPEEVLFTDGAVSKECARYLAENVKELLEADIGISFTGVAGPDASEHKEPGTVFVGLAIKDEPTVVFPLNLSGSRQQIRERSAKYGFYHLYKKLEEI.

This sequence belongs to the CinA family.

The chain is Putative competence-damage inducible protein from Bacillus anthracis.